A 1179-amino-acid polypeptide reads, in one-letter code: ATP-dependent helicase/deoxyribonuclease subunit B (1179 aa).

It belongs to the helicase family. AddB/RexB type 2 subfamily. Heterodimer of AddA and RexB. It depends on Mg(2+) as a cofactor.

Its function is as follows. The heterodimer acts as both an ATP-dependent DNA helicase and an ATP-dependent, dual-direction single-stranded exonuclease. Recognizes the chi site generating a DNA molecule suitable for the initiation of homologous recombination. This subunit has 5' -&gt; 3' nuclease activity but not helicase activity. In Lacticaseibacillus paracasei (strain ATCC 334 / BCRC 17002 / CCUG 31169 / CIP 107868 / KCTC 3260 / NRRL B-441) (Lactobacillus paracasei), this protein is ATP-dependent helicase/deoxyribonuclease subunit B.